A 143-amino-acid chain; its full sequence is MSLSSKDKATVKLFWGRMSGKAELIGADALSRMLAVYPQTKTYFSHWKSLSPGSPDVKKHGKTIMMGIGDAVTKMDDLERGLLTLSELHAFKLRVDPTNFKLLSLNILVVMAIMFPDDFTPMAHLAVDKLFCGRALALAEKYR.

Ser2 is subject to N-acetylserine. The 142-residue stretch at 2 to 143 (SLSSKDKATV…RALALAEKYR (142 aa)) folds into the Globin domain. His60 contacts O2. A heme b-binding site is contributed by His89.

It belongs to the globin family. Hb 1 is a heterotetramer of two alpha-1 and two beta-1 chains. Hb 3 is a heterotetramer of two alpha-1 and two beta-2 chains. Red blood cells.

In terms of biological role, involved in oxygen transport from gills to the various peripheral tissues. This Gadus morhua (Atlantic cod) protein is Hemoglobin subunit alpha-1 (hba1).